The sequence spans 249 residues: 5'-nucleotidase SurE (249 aa).

A divalent metal cation is bound by residues D8, D9, S39, and N91.

It belongs to the SurE nucleotidase family. It depends on a divalent metal cation as a cofactor.

It localises to the cytoplasm. It catalyses the reaction a ribonucleoside 5'-phosphate + H2O = a ribonucleoside + phosphate. Nucleotidase that shows phosphatase activity on nucleoside 5'-monophosphates. The chain is 5'-nucleotidase SurE from Pseudomonas aeruginosa (strain LESB58).